The following is a 391-amino-acid chain: 1-deoxy-D-xylulose 5-phosphate reductoisomerase (391 aa).

Residues Thr-10, Gly-11, Ser-12, Ile-13, Asn-38, and Asn-122 each coordinate NADPH. 1-deoxy-D-xylulose 5-phosphate is bound at residue Lys-123. NADPH is bound at residue Glu-124. Position 148 (Asp-148) interacts with Mn(2+). Positions 149, 150, 173, and 196 each coordinate 1-deoxy-D-xylulose 5-phosphate. Glu-150 is a Mn(2+) binding site. Gly-202 provides a ligand contact to NADPH. 1-deoxy-D-xylulose 5-phosphate contacts are provided by Ser-209, Asn-214, Lys-215, and Glu-218. Glu-218 is a binding site for Mn(2+).

The protein belongs to the DXR family. It depends on Mg(2+) as a cofactor. Mn(2+) serves as cofactor.

It catalyses the reaction 2-C-methyl-D-erythritol 4-phosphate + NADP(+) = 1-deoxy-D-xylulose 5-phosphate + NADPH + H(+). Its pathway is isoprenoid biosynthesis; isopentenyl diphosphate biosynthesis via DXP pathway; isopentenyl diphosphate from 1-deoxy-D-xylulose 5-phosphate: step 1/6. Functionally, catalyzes the NADPH-dependent rearrangement and reduction of 1-deoxy-D-xylulose-5-phosphate (DXP) to 2-C-methyl-D-erythritol 4-phosphate (MEP). The protein is 1-deoxy-D-xylulose 5-phosphate reductoisomerase of Wolbachia pipientis subsp. Culex pipiens (strain wPip).